Here is a 477-residue protein sequence, read N- to C-terminus: Ankyrin repeat, SAM and basic leucine zipper domain-containing protein 1 (477 aa).

3 positions are modified to phosphoserine: Ser-17, Ser-18, and Ser-20. ANK repeat units follow at residues 46 to 76 (EKKEKFKKALTTGDVSLVQELLDSGIISVDA), 80 to 109 (YGWTPLMYAASVANAELVRVLLDRGANASF), 112 to 146 (DKQTILITACSAHGSEEQILKCVELLLSRNADPNV), 150 to 179 (RLMTPIMYAARDGHTQVVALLVAHGAEVNT), 183 to 212 (NGYTALTWAARQGRKSIVLKLLELGANKML), and 216 to 245 (DGKLPSEIAKRNKHHEIFSLLSFTLNPLEG). One can recognise an SAM domain in the interval 274–336 (SYAAFGDLEV…KILTALKELE (63 aa)).

Interacts with DDX4, PIWIL1, RANBP9 and TDRD1.

The protein localises to the cytoplasm. In terms of biological role, plays a central role during spermatogenesis by repressing transposable elements and preventing their mobilization, which is essential for the germline integrity. Acts via the piRNA metabolic process, which mediates the repression of transposable elements during meiosis by forming complexes composed of piRNAs and Piwi proteins and governs the methylation and subsequent repression of transposons. Its association with pi-bodies suggests a participation in the primary piRNAs metabolic process. Required prior to the pachytene stage to facilitate the production of multiple types of piRNAs, including those associated with repeats involved in the regulation of retrotransposons. May act by mediating protein-protein interactions during germ cell maturation. The protein is Ankyrin repeat, SAM and basic leucine zipper domain-containing protein 1 (ASZ1) of Ateles geoffroyi (Black-handed spider monkey).